We begin with the raw amino-acid sequence, 1097 residues long: Transmembrane protein 132D (1097 aa).

Positions 1–30 are cleaved as a signal peptide; the sequence is MCPSEMGTLWYLWSPVLISLAALFSKVTEG. The Extracellular portion of the chain corresponds to 31–913; sequence RGILESIQRF…PDQAAKGLSD (883 aa). The span at 233–245 shows a compositional bias: basic and acidic residues; it reads DERGDCAKEDSRK. Disordered regions lie at residues 233 to 263 and 885 to 906; these read DERGDCAKEDSRKSGGAPAGHNDVDESSPPL and SFPDQVDLPGSNVGTEEHDPDQ. A helical membrane pass occupies residues 914–934; the sequence is LEIGMYALLGVFCLAILVFLI. Residues 935 to 1097 are Cytoplasmic-facing; sequence NCVTFALKYR…SCMERLHEHV (163 aa). The segment at 1021–1042 is disordered; sequence MLTDDKEQKSEPPTSPTSKRKR.

This sequence belongs to the TMEM132 family. As to expression, expressed in mature oligodendrocytes in the brain.

It localises to the membrane. In terms of biological role, regulates neuronal morphology via inhibition of the WAVE regulatory complex (WCR), a complex that controls F-actin cytoskeletal dynamics. This is Transmembrane protein 132D (Tmem132d) from Rattus norvegicus (Rat).